The primary structure comprises 399 residues: A-type ATP synthase subunit C (399 aa).

It belongs to the V-ATPase V0D/AC39 subunit family. As to quaternary structure, the A-type ATPase is composed of subunits A(3), B(3), C, D, E(1 or 2), F, H(2), I and K(x).

The protein resides in the cell membrane. Component of the A-type ATP synthase that produces ATP from ADP in the presence of a proton gradient across the membrane. This is A-type ATP synthase subunit C from Methanocaldococcus jannaschii (strain ATCC 43067 / DSM 2661 / JAL-1 / JCM 10045 / NBRC 100440) (Methanococcus jannaschii).